Reading from the N-terminus, the 350-residue chain is Transmembrane protein 185B (350 aa).

The next 7 helical transmembrane spans lie at 16-36, 41-61, 81-101, 111-131, 168-188, 211-231, and 240-260; these read LIYTCLLLFSVLLPLRLDGII, WAVFAPIWLWKLLVVAGASVG, FKAMLIAVGIHLLLLMFEVLV, FWLLVFMPLFFVSPVSVAACV, WLVVFVPLWILMSFLCLVVLY, VTMAISWITIVVPLLTFEVLL, and TFSYVSIFVPLWLSLLTLMAT.

It belongs to the TMEM185 family.

It is found in the membrane. The sequence is that of Transmembrane protein 185B (TMEM185B) from Homo sapiens (Human).